Consider the following 227-residue polypeptide: Cytidylate kinase (227 aa).

12-20 (GPSGAGKGT) contacts ATP.

This sequence belongs to the cytidylate kinase family. Type 1 subfamily.

It localises to the cytoplasm. It catalyses the reaction CMP + ATP = CDP + ADP. It carries out the reaction dCMP + ATP = dCDP + ADP. The sequence is that of Cytidylate kinase from Shigella sonnei (strain Ss046).